Here is a 122-residue protein sequence, read N- to C-terminus: Large ribosomal subunit protein uL14 (122 aa).

Belongs to the universal ribosomal protein uL14 family. In terms of assembly, part of the 50S ribosomal subunit. Forms a cluster with proteins L3 and L19. In the 70S ribosome, L14 and L19 interact and together make contacts with the 16S rRNA in bridges B5 and B8.

Binds to 23S rRNA. Forms part of two intersubunit bridges in the 70S ribosome. In Polynucleobacter necessarius subsp. necessarius (strain STIR1), this protein is Large ribosomal subunit protein uL14.